The primary structure comprises 1454 residues: Coiled-coil domain-containing protein 18 (1454 aa).

Ser45 carries the phosphoserine modification. 4 coiled-coil regions span residues 107-138, 170-402, 438-464, and 508-1309; these read APVD…HSLM, ILEE…ISQL, KLVI…NLTA, and TMNK…SGHE. The interval 828–851 is disordered; sequence QKQRESSAEKLRKMEEKCESAAHE. At Ser1355 the chain carries Phosphoserine.

The protein localises to the cytoplasm. It localises to the cytoskeleton. The protein resides in the microtubule organizing center. It is found in the centrosome. Its subcellular location is the centriolar satellite. This is Coiled-coil domain-containing protein 18 (CCDC18) from Homo sapiens (Human).